The chain runs to 196 residues: Inosine triphosphate pyrophosphatase 1 (196 aa).

20 to 25 (TGNDGK) provides a ligand contact to ITP. Mg(2+) is bound at residue glutamate 48. ITP is bound by residues lysine 61, 77–78 (DT), lysine 94, 153–156 (FGWD), lysine 177, and 182–183 (PR).

It belongs to the HAM1 NTPase family. As to quaternary structure, homodimer. It depends on Mg(2+) as a cofactor. Requires Mn(2+) as cofactor.

The protein localises to the cytoplasm. It carries out the reaction ITP + H2O = IMP + diphosphate + H(+). The catalysed reaction is dITP + H2O = dIMP + diphosphate + H(+). It catalyses the reaction XTP + H2O = XMP + diphosphate + H(+). Functionally, pyrophosphatase that hydrolyzes non-canonical purine nucleotides such as inosine triphosphate (ITP), deoxyinosine triphosphate (dITP) or xanthosine 5'-triphosphate (XTP) to their respective monophosphate derivatives. The enzyme does not distinguish between the deoxy- and ribose forms. Probably excludes non-canonical purines from RNA and DNA precursor pools, thus preventing their incorporation into RNA and DNA and avoiding chromosomal lesions. This chain is Inosine triphosphate pyrophosphatase 1, found in Trypanosoma cruzi (strain CL Brener).